Here is a 164-residue protein sequence, read N- to C-terminus: S-ribosylhomocysteine lyase (164 aa).

Positions 54, 58, and 128 each coordinate Fe cation.

The protein belongs to the LuxS family. As to quaternary structure, homodimer. Fe cation is required as a cofactor.

The enzyme catalyses S-(5-deoxy-D-ribos-5-yl)-L-homocysteine = (S)-4,5-dihydroxypentane-2,3-dione + L-homocysteine. Functionally, involved in the synthesis of autoinducer 2 (AI-2) which is secreted by bacteria and is used to communicate both the cell density and the metabolic potential of the environment. The regulation of gene expression in response to changes in cell density is called quorum sensing. Catalyzes the transformation of S-ribosylhomocysteine (RHC) to homocysteine (HC) and 4,5-dihydroxy-2,3-pentadione (DPD). The polypeptide is S-ribosylhomocysteine lyase (Campylobacter jejuni subsp. doylei (strain ATCC BAA-1458 / RM4099 / 269.97)).